The following is a 485-amino-acid chain: MHRKTLAELAAGLERREFSSVELTQAHLARIERLDPALNSFITTTPEIALAQARAADERLAKGEAGPLTGIPIAQKDIFCTKGVRTSCGSRMLDSFVSPYDACVVERFNAAGAVMLGKLNMDEFAMGSSNETSYYGPVKNPWNTATVPGGSSGGSAAAVAARLVPGATGTDTGGSIRQPAAFCGITGLKPTYGRVSRWGMIAFASSLDQAGPMARTAEDCAIMLQIMAGFDERDSTCVDRPVPDYRAALGNDLDGLRIGLPKEFFGEGLDPAIAGLIHAAVDEYRRLGAIVREISLPNMHLSVPAYYVVAPAECSSNLARFDGVRFGHRCENPTDLADLYTRSRGEGFGAEVKRRILIGTYALSAGYYDAYYLKAQKIRRLISEDFRRAFEEVDVIMGPTAPSVAFEFGAKSADPIAMYLSDIYTIAVNLAGLPGMSIPVGFSNGLPVGMQIIGGYFSEDRLLNVAHRYQQATDWHTRTPAGIAD.

Residues Lys-76 and Ser-151 each act as charge relay system in the active site. The active-site Acyl-ester intermediate is Ser-175.

It belongs to the amidase family. GatA subfamily. Heterotrimer of A, B and C subunits.

It catalyses the reaction L-glutamyl-tRNA(Gln) + L-glutamine + ATP + H2O = L-glutaminyl-tRNA(Gln) + L-glutamate + ADP + phosphate + H(+). Allows the formation of correctly charged Gln-tRNA(Gln) through the transamidation of misacylated Glu-tRNA(Gln) in organisms which lack glutaminyl-tRNA synthetase. The reaction takes place in the presence of glutamine and ATP through an activated gamma-phospho-Glu-tRNA(Gln). The chain is Glutamyl-tRNA(Gln) amidotransferase subunit A from Methylococcus capsulatus (strain ATCC 33009 / NCIMB 11132 / Bath).